Consider the following 571-residue polypeptide: Zinc finger protein 181 (571 aa).

In terms of domain architecture, KRAB spans 4-76 (VTFNDVAIDF…EKKLSKGMIP (73 aa)). Glycyl lysine isopeptide (Lys-Gly) (interchain with G-Cter in SUMO2) cross-links involve residues Lys-109 and Lys-126. C2H2-type zinc fingers lie at residues 237-259 (YTCS…WRIH), 265-287 (YECR…LISH), 293-315 (YKCI…QSTH), 321-343 (YECM…LRIH), 349-371 (YECR…QKIH), 377-399 (YECR…QRIH), 405-427 (YECN…QSIH), 433-455 (FECQ…LRNH), 461-483 (YECS…HRIH), 489-511 (YECI…QRIH), and 517-539 (YKCN…QRVH).

This sequence belongs to the krueppel C2H2-type zinc-finger protein family.

It is found in the nucleus. In terms of biological role, may be involved in transcriptional regulation. This Homo sapiens (Human) protein is Zinc finger protein 181 (ZNF181).